We begin with the raw amino-acid sequence, 287 residues long: Putative syntaxin-4 (287 aa).

Over Met-1–Ile-262 the chain is Cytoplasmic. Residues Lys-65 to Tyr-97 adopt a coiled-coil conformation. The t-SNARE coiled-coil homology domain maps to Phe-184 to Ala-246. The chain crosses the membrane as a helical; Anchor for type IV membrane protein span at residues Ala-263 to Ile-283. The Extracellular segment spans residues Pro-284–Lys-287.

It belongs to the syntaxin family.

It localises to the membrane. Functionally, potentially involved in docking of synaptic vesicles at presynaptic active zones. In Caenorhabditis elegans, this protein is Putative syntaxin-4 (syx-4).